Consider the following 167-residue polypeptide: EF-hand calcium-binding domain-containing protein 11 (167 aa).

EF-hand domains follow at residues 17-52 (AERK…LFGY), 91-126 (DPYE…VAPR), and 127-162 (LQER…GLAN). The Ca(2+) site is built by Asp-140, Asp-142, Asp-144, His-146, and Asp-151.

The sequence is that of EF-hand calcium-binding domain-containing protein 11 (efcab11) from Danio rerio (Zebrafish).